Reading from the N-terminus, the 520-residue chain is Cell division control protein 3 (520 aa).

Over residues Met-1–Phe-24 the composition is skewed to basic and acidic residues. Residues Met-1 to Leu-83 are disordered. Position 2 is an N-acetylserine (Ser-2). At Ser-2 the chain carries Phosphoserine. Lys-4 is covalently cross-linked (Glycyl lysine isopeptide (Lys-Gly) (interchain with G-Cter in SUMO)). Residue Ser-9 is modified to Phosphoserine. Glycyl lysine isopeptide (Lys-Gly) (interchain with G-Cter in SUMO) cross-links involve residues Lys-11 and Lys-30. At Thr-47 the chain carries Phosphothreonine. The segment covering Asp-51–Val-64 has biased composition (basic and acidic residues). A Phosphoserine modification is found at Ser-60. Residue Lys-63 forms a Glycyl lysine isopeptide (Lys-Gly) (interchain with G-Cter in SUMO) linkage. Ser-77 carries the phosphoserine modification. In terms of domain architecture, Septin-type G spans Asn-116–Lys-411. The G1 motif stretch occupies residues Gly-126–Thr-133. Gly-126 to Thr-133 lines the GTP pocket. The segment covering Glu-156–Gln-167 has biased composition (acidic residues). The tract at residues Glu-156 to Lys-181 is disordered. Positions Gly-168 to Arg-179 are enriched in basic and acidic residues. At Ser-175 the chain carries Phosphoserine. The tract at residues Asp-204–Gly-207 is G3 motif. Residues Gly-207, Lys-287–Glu-295, Gly-344, and Arg-360 each bind GTP. Residues Ala-286–Asp-289 form a G4 motif region. Residue Lys-287 forms a Glycyl lysine isopeptide (Lys-Gly) (interchain with G-Cter in SUMO) linkage. A coiled-coil region spans residues Ile-427–His-508. Thr-468 bears the Phosphothreonine mark. Positions Glu-496–Arg-520 are disordered. Positions Leu-497–Pro-510 are enriched in polar residues. Ser-509 is subject to Phosphoserine.

It belongs to the TRAFAC class TrmE-Era-EngA-EngB-Septin-like GTPase superfamily. Septin GTPase family. As to quaternary structure, component of the septin complex which consists of CDC3, CDC10, CDC11, CDC12 and probably SHS1 and rearranges to a cortical collar of highly ordered filaments at the mother-bud-neck. A complex formed by CDC3, CDC10, CDC11 and CDC12 is capable of forming long filaments in vitro and the components seem to be present in a 2:2:2:2 arrangement in vivo. The filaments are proposed to be formed by the end-to-end polymerization of CDC3-CDC12-CDC11 complexes with CDC10 serving as a bridge to bundle the polymers into paired filaments. Component of the GIN4 complex composed of at least BNI5, CDC3, CDC10, CDC11, CDC12, GIN4, NAP1 and SHS1. Self-associates. Interacts with SIZ1 and SYP1. In terms of processing, phosphorylated by CDC28. Phosphorylation at the end of G1 may facilitate initiation of a new cell cycle by promoting disassembly of the obsolete septin ring from the previous cell cycle. Post-translationally, sumoylated during mitosis on the mother cell side of the bud neck by UBC9/SIZ1. Sumoylation probably plays a central role in regulating septin ring disassembly during the cell cycle.

It is found in the membrane. Its subcellular location is the bud neck. In terms of biological role, septins are GTPases involved in cytokinesis that assemble early in the cell cycle as a patch at the incipient bud site and form a ring approximate 15 minutes before bud emergence, which transforms into an hour-glass shaped collar of cortical filaments that spans both sides of the mother-bud neck. This collar persists until just before cytokinesis, when it splits into two rings that occupy opposite sides of the neck. The septins at the bud neck serve as a structural scaffold that recruits different components involved in diverse processes at specific stages during the cell cycle. Many proteins bind asymmetrically to the septin collar. The septin assembly is regulated by protein kinases GIN4 and/or CLA4. May act by recruiting MYO1 and HOF1, a protein involved in septation, to the site of cleavage. Septins are also involved in cell morphogenesis, bud site selection, chitin deposition, cell cycle regulation, cell compartmentalization and spore wall formation. This Saccharomyces cerevisiae (strain ATCC 204508 / S288c) (Baker's yeast) protein is Cell division control protein 3 (CDC3).